Here is a 366-residue protein sequence, read N- to C-terminus: Pyruvate dehydrogenase E1 component subunit beta, mitochondrial (366 aa).

Residues 1-33 constitute a mitochondrion transit peptide; it reads MFSRLPTSLARNVARRAPTSFVRPSAAAAALRF. Position 95 (E95) interacts with thiamine diphosphate. K(+) contacts are provided by A196, I197, D199, and N201.

Pyruvate dehydrogenase (E1) is a tetramer of 2 alpha and 2 beta subunits. Eukaryotic pyruvate dehydrogenase (PDH) complexes are organized as a core consisting of the oligomeric dihydrolipoamide acetyl-transferase (E2), around which are arranged multiple copies of pyruvate dehydrogenase (E1), dihydrolipoamide dehydrogenase (E3) and protein X (E3BP) bound by non-covalent bonds. Thiamine diphosphate serves as cofactor.

Its subcellular location is the mitochondrion matrix. The enzyme catalyses N(6)-[(R)-lipoyl]-L-lysyl-[protein] + pyruvate + H(+) = N(6)-[(R)-S(8)-acetyldihydrolipoyl]-L-lysyl-[protein] + CO2. Functionally, the pyruvate dehydrogenase complex catalyzes the overall conversion of pyruvate to acetyl-CoA and CO(2). The sequence is that of Pyruvate dehydrogenase E1 component subunit beta, mitochondrial (PDB1) from Saccharomyces cerevisiae (strain ATCC 204508 / S288c) (Baker's yeast).